An 86-amino-acid polypeptide reads, in one-letter code: Small ribosomal subunit protein uS15 (86 aa).

This sequence belongs to the universal ribosomal protein uS15 family. In terms of assembly, part of the 30S ribosomal subunit. Forms a bridge to the 50S subunit in the 70S ribosome, contacting the 23S rRNA.

One of the primary rRNA binding proteins, it binds directly to 16S rRNA where it helps nucleate assembly of the platform of the 30S subunit by binding and bridging several RNA helices of the 16S rRNA. Functionally, forms an intersubunit bridge (bridge B4) with the 23S rRNA of the 50S subunit in the ribosome. The sequence is that of Small ribosomal subunit protein uS15 from Endomicrobium trichonymphae.